A 120-amino-acid polypeptide reads, in one-letter code: NAD(P)H-quinone oxidoreductase subunit 3, chloroplastic (120 aa).

The next 3 membrane-spanning stretches (helical) occupy residues 9-29 (IFWA…LISG), 64-84 (MFAL…PWAM), and 88-108 (VLGV…IVGS).

It belongs to the complex I subunit 3 family. As to quaternary structure, NDH is composed of at least 16 different subunits, 5 of which are encoded in the nucleus.

Its subcellular location is the plastid. It localises to the chloroplast thylakoid membrane. It catalyses the reaction a plastoquinone + NADH + (n+1) H(+)(in) = a plastoquinol + NAD(+) + n H(+)(out). It carries out the reaction a plastoquinone + NADPH + (n+1) H(+)(in) = a plastoquinol + NADP(+) + n H(+)(out). In terms of biological role, NDH shuttles electrons from NAD(P)H:plastoquinone, via FMN and iron-sulfur (Fe-S) centers, to quinones in the photosynthetic chain and possibly in a chloroplast respiratory chain. The immediate electron acceptor for the enzyme in this species is believed to be plastoquinone. Couples the redox reaction to proton translocation, and thus conserves the redox energy in a proton gradient. The chain is NAD(P)H-quinone oxidoreductase subunit 3, chloroplastic from Phaseolus vulgaris (Kidney bean).